We begin with the raw amino-acid sequence, 359 residues long: Phospho-N-acetylmuramoyl-pentapeptide-transferase (359 aa).

Transmembrane regions (helical) follow at residues 7 to 27 (RSLTFTSLFFLLVISLIVNSY), 28 to 48 (IFNSLLIINIFLISSLISLVI), 82 to 102 (MGGIFIILPFLLLLLIVNNYV), 103 to 123 (DSVGILLLFFCTISFFIIGFL), 147 to 167 (ALIAVLFIIFASQSNYINPLI), 179 to 199 (IVIFPICFLTLVGLSNAVNLT), 203 to 223 (DGLAAGCSAIVFFGLGTEIFI), 229 to 249 (LIIYGLISYAMSGLCIGFLKY), 256 to 276 (IFMGDTGSLTIGAALGSISIL), and 337 to 357 (IVENFWKVNILLIVLGIVLKI).

It belongs to the glycosyltransferase 4 family. MraY subfamily. It depends on Mg(2+) as a cofactor.

It is found in the cell inner membrane. The catalysed reaction is UDP-N-acetyl-alpha-D-muramoyl-L-alanyl-gamma-D-glutamyl-meso-2,6-diaminopimeloyl-D-alanyl-D-alanine + di-trans,octa-cis-undecaprenyl phosphate = di-trans,octa-cis-undecaprenyl diphospho-N-acetyl-alpha-D-muramoyl-L-alanyl-D-glutamyl-meso-2,6-diaminopimeloyl-D-alanyl-D-alanine + UMP. Its pathway is cell wall biogenesis; peptidoglycan biosynthesis. In terms of biological role, catalyzes the initial step of the lipid cycle reactions in the biosynthesis of the cell wall peptidoglycan: transfers peptidoglycan precursor phospho-MurNAc-pentapeptide from UDP-MurNAc-pentapeptide onto the lipid carrier undecaprenyl phosphate, yielding undecaprenyl-pyrophosphoryl-MurNAc-pentapeptide, known as lipid I. The polypeptide is Phospho-N-acetylmuramoyl-pentapeptide-transferase (Prochlorococcus marinus subsp. pastoris (strain CCMP1986 / NIES-2087 / MED4)).